A 468-amino-acid chain; its full sequence is O-methyltransferase lcsG (468 aa).

Polar residues predominate over residues 1-12 (MGDNVQSDTTAA). Residues 1–29 (MGDNVQSDTTAAQAGITDAPTAPTSAPVS) form a disordered region. S-adenosyl-L-methionine is bound by residues 298 to 299 (GG), Asp-321, 348 to 349 (DF), and Lys-363.

This sequence belongs to the class I-like SAM-binding methyltransferase superfamily. Cation-independent O-methyltransferase family.

The protein operates within secondary metabolite biosynthesis. Functionally, O-methyltransferase; part of the gene cluster that mediates the biosynthesis of the lipopeptide antibiotics leucinostatins that show extensive biological activities, including antimalarial, antiviral, antibacterial, antifungal, and antitumor activities, as well as phytotoxic. Leucinostatin A contains nine amino acid residues, including the unusual amino acid 4-methyl-L-proline (MePro), 2-amino-6-hydroxy-4-methyl-8-oxodecanoic acid (AHyMeOA), 3-hydroxyleucine (HyLeu), alpha-aminoisobutyric acid (AIB), beta-Ala, a 4-methylhex-2-enoic acid at the N-terminus as well as a N1,N1-dimethylpropane-1,2-diamine (DPD) at the C-terminus. The biosynthesis of leucinostatins is probably initiated with the assembly of 4-methylhex-2-enoic acid by a reducing PKS. Two reducing polyketide synthases, lcsB and lcsC, have been identified in the cluster and it is not clear which is the one that assembles 4-methylhex-2-enoic acid since both contain KS, AT, DH, cMT, ER, KR and ACP domains. The polyketide residue might be transferred to the NRPS lcsA, mediated by two additional enzymes, the acyl-CoA ligase lcsD and the thioesterase lcsE. The linear polyketide carboxylic acid, which is released from PKS, is converted to a CoA thioester by lcsD, and then lcsE hydrolyzes the thiol bond and shuttles the polyketide intermediate to lcsA. The C domain of the first module catalyzed the condensation of 4-methylhex-2-enoic acid and MePro carried by domain A1, followed by successive condensations of nine amino acids to trigger the elongation of the linear peptide. A5 and A6 domains of lcsA are proposed to incorporate leucine, A2 AHyMeOA, and A3 incorporates HyLeu. A4, A7 and A8 incorporate AIB. The AHyMeOA in leucinostatin A activated by the A2 might be produced by the second PKS (lcsB or lcsC) present within the cluster. The MePro is probably produced via leucine cyclization and may originate from a separate pathway, independent of the cluster. Another nonproteinogenic amino acid, beta-Ala, could be produced by an aspartic acid decarboxylase also localized outside of the cluster. Two candidates are VFPBJ_01400 and VFPBJ_10476. The final peptide scaffold may be released by the NAD(P)H-dependent thioester reductase (TE) at the C-terminal region of lcsA. Transamination of the lcsA product by the transaminase lcsP may produce DPD at the C-terminus. Further hydroxylation steps performed alternatively by the cytochrome P450 monooxygenases lcsI, lcsK and lcsN then yield the non-methylated leucinostatins precursor. It is also possible that leucines can be hydroxylated prior to their incorporation into the peptide. Varying extents of methylation then lead to the formation of leucinostatins A and B. In Purpureocillium lilacinum (Paecilomyces lilacinus), this protein is O-methyltransferase lcsG.